The sequence spans 434 residues: Probable G-protein coupled receptor B0563.6 (434 aa).

N-linked (GlcNAc...) asparagine glycosylation is present at Asn12. The next 2 membrane-spanning stretches (helical) occupy residues 30-50 (VLPC…MVLA) and 65-85 (LAVA…TEYL). An N-linked (GlcNAc...) asparagine glycan is attached at Asn88. Helical transmembrane passes span 105-125 (LMLT…VALS) and 147-167 (ATRA…PYAI). The N-linked (GlcNAc...) asparagine glycan is linked to Asn181. Helical transmembrane passes span 208 to 228 (ILRF…MIAF) and 258 to 278 (GGTV…LLLI). N-linked (GlcNAc...) asparagine glycans are attached at residues Asn429 and Asn430.

The protein belongs to the G-protein coupled receptor 1 family.

The protein localises to the cell membrane. In terms of biological role, not known. Putative receptor. The chain is Probable G-protein coupled receptor B0563.6 from Caenorhabditis elegans.